The chain runs to 610 residues: Sensor protein kinase WalK (610 aa).

2 helical membrane-spanning segments follow: residues 14 to 34 (LVIV…LYFT) and 184 to 204 (IFIV…FFIA). The HAMP domain maps to 205–257 (RTITKPITDMRNQTVEMSKGNYTQRVKIYGNDEIGELALAFNNLSKRVQEAQA). Residues 262–333 (EKRRLDSVIT…IQENNDSFLL (72 aa)) form the PAS domain. The region spanning 326–379 (ENNDSFLLDINENEGIIARVNFSTIVQETGFVTGYIAVLHDVTEQQQVERERRE) is the PAC domain. Positions 383-601 (NVSHELRTPL…SIFITLPCEV (219 aa)) constitute a Histidine kinase domain. At His-386 the chain carries Phosphohistidine; by autocatalysis.

Autophosphorylated.

It is found in the cell membrane. It carries out the reaction ATP + protein L-histidine = ADP + protein N-phospho-L-histidine.. In terms of biological role, member of the two-component regulatory system WalK/WalR. WalK functions as a sensor protein kinase which is autophosphorylated at a histidine residue and transfers its phosphate group to WalR. This is Sensor protein kinase WalK (walK) from Staphylococcus saprophyticus subsp. saprophyticus (strain ATCC 15305 / DSM 20229 / NCIMB 8711 / NCTC 7292 / S-41).